The primary structure comprises 35 residues: U1-theraphotoxin-Hhn1a (35 aa).

3 disulfides stabilise this stretch: Cys2–Cys16, Cys9–Cys21, and Cys15–Cys28.

Belongs to the neurotoxin 10 (Hwtx-1) family. 24 (Hwtx-6) subfamily. Expressed by the venom gland.

It localises to the secreted. Functionally, gating-modifier toxin that dose-dependently inhibits inactivation of voltage-gated sodium channels and reduces the peak of sodium current in cockroach DUM neurons. In vivo, reversibly paralyzes cockroaches for several hours, paralyzes rat after intracerebroventricular injection and blocks the neuromuscular transmission of the isolated rat phrenic nerve-diaphragm preparation. This Cyriopagopus hainanus (Chinese bird spider) protein is U1-theraphotoxin-Hhn1a.